The chain runs to 676 residues: uncharacterized protein (676 aa).

This is an uncharacterized protein from Magallana gigas (Pacific oyster).